The following is a 380-amino-acid chain: MAPNIRKSHPLLKMVNNSLIDLPTPSNISTWWNFGSLLGICLTMQILTGLLLATHYTADTTLAFSSVAHTCRDVQYGWLIRNLHANGASFFFICIYLHIGRGFYYGSYLYKETWNTGVILLLTLMATAFVGYVLPWGQMSFWGATVITNLFSAIPYIGQTLVEWAWGGFSVDNPTLTRFFALHFLLPFAIAGLTLIHLTFLHESGSNNPLGIVSNCDKIPFHPYFSLKDILGLTLLLLPLTTLALFSPNLLGDPENFTPANPLVTPPHIKPEWYFLFAYAILRSIPNKLGGVLALAASVLILFLCPLLHKSKQRTMAFRPLSQLLFWTLTANLLILTWVGSQPVEHPFIIIGQLASLTYFFTLLILFPIAGALENKLLNY.

Transmembrane regions (helical) follow at residues 34–54, 78–99, 114–134, and 179–199; these read FGSLLGICLTMQILTGLLLAT, WLIRNLHANGASFFFICIYLHI, WNTGVILLLTLMATAFVGYVL, and FFALHFLLPFAIAGLTLIHLT. Histidine 84 and histidine 98 together coordinate heme b. Positions 183 and 197 each coordinate heme b. Histidine 202 contributes to the a ubiquinone binding site. Helical transmembrane passes span 227-247, 289-309, 321-341, and 348-368; these read LKDILGLTLLLLPLTTLALFS, LGGVLALAASVLILFLCPLLH, LSQLLFWTLTANLLILTWVGS, and FIIIGQLASLTYFFTLLILFP.

This sequence belongs to the cytochrome b family. In terms of assembly, the cytochrome bc1 complex contains 11 subunits: 3 respiratory subunits (MT-CYB, CYC1 and UQCRFS1), 2 core proteins (UQCRC1 and UQCRC2) and 6 low-molecular weight proteins (UQCRH/QCR6, UQCRB/QCR7, UQCRQ/QCR8, UQCR10/QCR9, UQCR11/QCR10 and a cleavage product of UQCRFS1). This cytochrome bc1 complex then forms a dimer. The cofactor is heme b.

The protein localises to the mitochondrion inner membrane. Component of the ubiquinol-cytochrome c reductase complex (complex III or cytochrome b-c1 complex) that is part of the mitochondrial respiratory chain. The b-c1 complex mediates electron transfer from ubiquinol to cytochrome c. Contributes to the generation of a proton gradient across the mitochondrial membrane that is then used for ATP synthesis. In Ciconia ciconia (White stork), this protein is Cytochrome b (MT-CYB).